The sequence spans 321 residues: L-lactate dehydrogenase (321 aa).

NAD(+) contacts are provided by residues Val-19, Asp-40, Lys-45, Tyr-71, and 85–86; that span reads GA. Substrate is bound by residues Gln-88, Arg-94, and 126 to 129; that span reads NPVD. Residues 124–126 and Ser-149 contribute to the NAD(+) site; that span reads ATN. 154 to 157 is a binding site for substrate; sequence DTAR. Residues Arg-159 and His-174 each contribute to the beta-D-fructose 1,6-bisphosphate site. His-181 serves as the catalytic Proton acceptor. The residue at position 226 (Tyr-226) is a Phosphotyrosine. Substrate is bound at residue Thr-235.

Belongs to the LDH/MDH superfamily. LDH family. Homotetramer.

The protein resides in the cytoplasm. It carries out the reaction (S)-lactate + NAD(+) = pyruvate + NADH + H(+). Its pathway is fermentation; pyruvate fermentation to lactate; (S)-lactate from pyruvate: step 1/1. Allosterically activated by fructose 1,6-bisphosphate (FBP). Catalyzes the conversion of lactate to pyruvate. The chain is L-lactate dehydrogenase from Oceanobacillus iheyensis (strain DSM 14371 / CIP 107618 / JCM 11309 / KCTC 3954 / HTE831).